Here is a 302-residue protein sequence, read N- to C-terminus: Stanniocalcin-2 (302 aa).

Residues 1–24 (MCAERLGHFMTLALVLATIDPARG) form the signal peptide. The tract at residues 23–44 (RGTDATNPPEGPQDRSSQQKGR) is disordered. Residue asparagine 73 is glycosylated (N-linked (GlcNAc...) asparagine). The disordered stretch occupies residues 218 to 302 (PPTAPPERQP…EQSEYSDIRR (85 aa)). Residues 227-264 (PQVDRAKLSRAHHGEAGHHLPEPSSRETGRGAKGERGS) show a composition bias toward basic and acidic residues. A phosphoserine mark is found at serine 250 and serine 251. Phosphothreonine is present on threonine 254.

It belongs to the stanniocalcin family. As to quaternary structure, homodimer; disulfide-linked.

It localises to the secreted. Functionally, has an anti-hypocalcemic action on calcium and phosphate homeostasis. The sequence is that of Stanniocalcin-2 (STC2) from Macaca nemestrina (Pig-tailed macaque).